Here is a 199-residue protein sequence, read N- to C-terminus: Nitrile hydratase subunit alpha (199 aa).

The Fe(3+) site is built by Cys102, Cys105, Ser106, and Cys107. Position 105 is a cysteine sulfinic acid (-SO2H) (Cys105). Cys107 is modified (cysteine sulfenic acid (-SOH)).

Belongs to the nitrile hydratase subunit alpha family. Heterodimer of an alpha and a beta chain. Requires Fe(3+) as cofactor. Post-translationally, oxidation on Cys-105 is essential for the activity. In terms of processing, oxidation on Cys-107 stabilizes the Fe-NO ligand coordinated in the inactive form.

The catalysed reaction is an aliphatic primary amide = an aliphatic nitrile + H2O. Its activity is regulated as follows. Inactivated by oxidation of Cys-107 to a sulfenic acid. Its function is as follows. NHase catalyzes the hydration of various nitrile compounds to the corresponding amides. Industrial production of acrylamide is now being developed using some of the enzymes of this class. The sequence is that of Nitrile hydratase subunit alpha (nthA) from Rhodococcus sp.